Here is a 517-residue protein sequence, read N- to C-terminus: Ubiquitin carboxyl-terminal hydrolase 30 (517 aa).

Residues 1-35 (MLSSRAQAARTAADKALQRFLRTGAAVRYKVMKNW) lie on the Mitochondrial intermembrane side of the membrane. The helical transmembrane segment at 36-56 (GVIGGIAAALAAGIYVIWGPI) threads the bilayer. Residues 57–517 (TERKKRRKGL…QQGREYRSEE (461 aa)) lie on the Cytoplasmic side of the membrane. One can recognise a USP domain in the interval 68-502 (PGLVNLGNTC…SAYLLFYERV (435 aa)). The active-site Nucleophile is the Cys-77. Glycyl lysine isopeptide (Lys-Gly) (interchain with G-Cter in ubiquitin) cross-links involve residues Lys-235 and Lys-289. Residues 364-395 (SQHGPKATESPGSALGVQDTQAAPKPGLSQPA) are disordered. The Proton acceptor role is filled by His-452.

Belongs to the peptidase C19 family. Post-translationally, ubiquitinated by parkin (PRKN) at Lys-235 and Lys-289, leading to its degradation.

It localises to the mitochondrion outer membrane. It catalyses the reaction Thiol-dependent hydrolysis of ester, thioester, amide, peptide and isopeptide bonds formed by the C-terminal Gly of ubiquitin (a 76-residue protein attached to proteins as an intracellular targeting signal).. With respect to regulation, inhibited by the diterpenoid derivative 15-oxospiramilactone (S3). In terms of biological role, deubiquitinating enzyme tethered to the mitochondrial outer membrane that acts as a key inhibitor of mitophagy by counteracting the action of parkin (PRKN): hydrolyzes ubiquitin attached by parkin on target proteins, such as RHOT1/MIRO1 and TOMM20, thereby blocking parkin's ability to drive mitophagy. Preferentially cleaves 'Lys-6'- and 'Lys-11'-linked polyubiquitin chains, 2 types of linkage that participate in mitophagic signaling. Does not cleave efficiently polyubiquitin phosphorylated at 'Ser-65'. Acts as a negative regulator of mitochondrial fusion by mediating deubiquitination of MFN1 and MFN2. This Rattus norvegicus (Rat) protein is Ubiquitin carboxyl-terminal hydrolase 30 (Usp30).